Reading from the N-terminus, the 118-residue chain is MARIAGVNLPAQKHVWVGLQSIYGIGRTRSKKVCEVAGVASTTKIRDLSEPEIERLRAEVGKYIVEGDLRREIGIAIKRLMDLGCYRGLRHRRGLPLRGQRTRTNARTRKGPRKAIKK.

A disordered region spans residues 96–118 (PLRGQRTRTNARTRKGPRKAIKK).

It belongs to the universal ribosomal protein uS13 family. Part of the 30S ribosomal subunit. Forms a loose heterodimer with protein S19. Forms two bridges to the 50S subunit in the 70S ribosome.

Located at the top of the head of the 30S subunit, it contacts several helices of the 16S rRNA. In the 70S ribosome it contacts the 23S rRNA (bridge B1a) and protein L5 of the 50S subunit (bridge B1b), connecting the 2 subunits; these bridges are implicated in subunit movement. Contacts the tRNAs in the A and P-sites. The polypeptide is Small ribosomal subunit protein uS13 (Stenotrophomonas maltophilia (strain K279a)).